The chain runs to 90 residues: Exodeoxyribonuclease 7 small subunit (90 aa).

Residues 62–90 (QDGQANPMSSQGHTAGEYPDDEAEEAEEA) form a disordered region. Residues 64–74 (GQANPMSSQGH) show a composition bias toward polar residues. Residues 79 to 90 (YPDDEAEEAEEA) are compositionally biased toward acidic residues.

Belongs to the XseB family. Heterooligomer composed of large and small subunits.

It is found in the cytoplasm. It carries out the reaction Exonucleolytic cleavage in either 5'- to 3'- or 3'- to 5'-direction to yield nucleoside 5'-phosphates.. In terms of biological role, bidirectionally degrades single-stranded DNA into large acid-insoluble oligonucleotides, which are then degraded further into small acid-soluble oligonucleotides. This Desulfovibrio desulfuricans (strain ATCC 27774 / DSM 6949 / MB) protein is Exodeoxyribonuclease 7 small subunit.